Reading from the N-terminus, the 401-residue chain is Multidrug resistance protein MdtH (401 aa).

Transmembrane regions (helical) follow at residues 13–33, 34–54, 99–116, 139–159, 165–185, 214–234, 243–263, 277–297, 299–319, 340–360, and 368–388; these read YFLL…FPLI, SIRF…ALGL, PWIL…GTLF, LLMM…SWLL, FVCW…VWLL, VLTL…LPIV, AAVK…LYPI, LMFG…ITHL, TLFM…PARE, LGLA…YDTG, and LPWF…YWQF.

It belongs to the major facilitator superfamily. DHA1 family. MdtH (TC 2.A.1.2.21) subfamily.

Its subcellular location is the cell inner membrane. The polypeptide is Multidrug resistance protein MdtH (Yersinia enterocolitica serotype O:8 / biotype 1B (strain NCTC 13174 / 8081)).